The following is a 221-amino-acid chain: Transmembrane protein 267 (221 aa).

The next 5 membrane-spanning stretches (helical) occupy residues 28-48 (ASAGLGAFCFVADHFLTLPFI), 57-77 (LFDNTVHAIIGLWSWAIVIGL), 86-106 (VILAGFLASVIDLDHFYMAGS), 121-141 (LHCSTLIPALCFSLRLLMWAC), and 182-204 (ISYWLYVTITATLPHLCSVLMYL).

It localises to the membrane. The chain is Transmembrane protein 267 (tmem267) from Danio rerio (Zebrafish).